The following is a 156-amino-acid chain: ATP synthase subunit b (156 aa).

Residues L7–P27 traverse the membrane as a helical segment.

It belongs to the ATPase B chain family. F-type ATPases have 2 components, F(1) - the catalytic core - and F(0) - the membrane proton channel. F(1) has five subunits: alpha(3), beta(3), gamma(1), delta(1), epsilon(1). F(0) has three main subunits: a(1), b(2) and c(10-14). The alpha and beta chains form an alternating ring which encloses part of the gamma chain. F(1) is attached to F(0) by a central stalk formed by the gamma and epsilon chains, while a peripheral stalk is formed by the delta and b chains.

It localises to the cell inner membrane. In terms of biological role, f(1)F(0) ATP synthase produces ATP from ADP in the presence of a proton or sodium gradient. F-type ATPases consist of two structural domains, F(1) containing the extramembraneous catalytic core and F(0) containing the membrane proton channel, linked together by a central stalk and a peripheral stalk. During catalysis, ATP synthesis in the catalytic domain of F(1) is coupled via a rotary mechanism of the central stalk subunits to proton translocation. Functionally, component of the F(0) channel, it forms part of the peripheral stalk, linking F(1) to F(0). This chain is ATP synthase subunit b, found in Shewanella sp. (strain ANA-3).